We begin with the raw amino-acid sequence, 318 residues long: Transcription factor FER-LIKE IRON DEFICIENCY-INDUCED TRANSCRIPTION FACTOR (318 aa).

The tract at residues 90–138 (FDGDSVRAGGEEDEEDYNDGDDSSATTTNNDGTRKTKTDRSRTLISERR) is disordered. Residues 100–111 (EEDEEDYNDGDD) show a composition bias toward acidic residues. A compositionally biased stretch (basic and acidic residues) spans 121-136 (GTRKTKTDRSRTLISE). The region spanning 127–176 (TDRSRTLISERRRRGRMKDKLYALRSLVPNITKMDKASIVGDAVLYVQEL) is the bHLH domain.

Homodimer. Expressed in roots and inflorescence, and to a lower extent, in leaves and stems. In roots, confined to the outer cell layers, specifically in the differentiation zone. Also detected in the endodermis and inner tissues of the central cylinder.

It localises to the nucleus. Transcription factor. Essential protein involved in iron uptake responses. Regulates FRO2 at the level of mRNA accumulation and IRT1 at the level of protein accumulation. Confers enhanced iron mobilization responses at low iron supply. The chain is Transcription factor FER-LIKE IRON DEFICIENCY-INDUCED TRANSCRIPTION FACTOR (FIT) from Arabidopsis thaliana (Mouse-ear cress).